The primary structure comprises 427 residues: Serine--tRNA ligase (427 aa).

231–233 (TAE) contacts L-serine. 262–264 (RSE) serves as a coordination point for ATP. Glu-285 provides a ligand contact to L-serine. 349–352 (EISS) provides a ligand contact to ATP. Ser-385 provides a ligand contact to L-serine.

Belongs to the class-II aminoacyl-tRNA synthetase family. Type-1 seryl-tRNA synthetase subfamily. As to quaternary structure, homodimer. The tRNA molecule binds across the dimer.

It localises to the cytoplasm. The catalysed reaction is tRNA(Ser) + L-serine + ATP = L-seryl-tRNA(Ser) + AMP + diphosphate + H(+). It carries out the reaction tRNA(Sec) + L-serine + ATP = L-seryl-tRNA(Sec) + AMP + diphosphate + H(+). The protein operates within aminoacyl-tRNA biosynthesis; selenocysteinyl-tRNA(Sec) biosynthesis; L-seryl-tRNA(Sec) from L-serine and tRNA(Sec): step 1/1. Its function is as follows. Catalyzes the attachment of serine to tRNA(Ser). Is also able to aminoacylate tRNA(Sec) with serine, to form the misacylated tRNA L-seryl-tRNA(Sec), which will be further converted into selenocysteinyl-tRNA(Sec). In Exiguobacterium sp. (strain ATCC BAA-1283 / AT1b), this protein is Serine--tRNA ligase.